A 297-amino-acid polypeptide reads, in one-letter code: Syntaxin-4 (297 aa).

Residues Met-1 to Asp-12 are compositionally biased toward basic and acidic residues. Positions Met-1–Glu-21 are disordered. Residues Met-1–Phe-275 are Cytoplasmic-facing. A phosphoserine mark is found at Ser-14 and Ser-15. A Phosphothreonine modification is found at Thr-31. Phosphoserine is present on residues Ser-36, Ser-117, Ser-208, and Ser-248. Residues Gln-43 to Thr-163 are a coiled coil. The region spanning Leu-200–Ala-262 is the t-SNARE coiled-coil homology domain. The chain crosses the membrane as a helical; Anchor for type IV membrane protein span at residues Ile-276–Leu-296. A topological domain (extracellular) is located at residue Val-297.

It belongs to the syntaxin family. Component of the SNARE complex composed of STX4, SNAP23 and VAMP7 that interacts with SYT7 during lysosomal exocytosis. Found in a complex with VAMP8 and SNAP23. Detected in a complex with SNAP23 and STXBP4. Interacts with VAMP2. Interacts with SNAP23 and SNAPIN. Interacts with LLGL1. Interacts (via C-terminus) with CENPF. Interacts with DOC2B. Interacts with STXBP6. Interacts with STXBP3; excludes interaction with DOC2B and SNAP25. Interacts with STXBP4; excludes interaction with VAMP2. Interacts with STXBP5L.

It is found in the cell membrane. The protein localises to the cell projection. It localises to the neuron projection. The protein resides in the stereocilium. Its function is as follows. Plasma membrane t-SNARE that mediates docking of transport vesicles. Necessary for the translocation of SLC2A4 from intracellular vesicles to the plasma membrane. In neurons, recruited at neurite tips to membrane domains rich in the phospholipid 1-oleoyl-2-palmitoyl-PC (OPPC) which promotes neurite tip surface expression of the dopamine transporter SLC6A3/DAT by facilitating fusion of SLC6A3-containing transport vesicles with the plasma membrane. Together with STXB3 and VAMP2, may also play a role in docking/fusion of intracellular GLUT4-containing vesicles with the cell surface in adipocytes and in docking of synaptic vesicles at presynaptic active zones. Required for normal hearing. The sequence is that of Syntaxin-4 (STX4) from Bos taurus (Bovine).